A 237-amino-acid chain; its full sequence is MPAEGSLAQEFVQFAVESGVLRFGQFKTKAGRMSPYFFNAGLFDDGAKLGRLAQFYARQLLAEEQRSGLAFDMIFGPAYKGIPLAAAVAIELARLGRNLPFAYNRKEAKDHGEGGTLVGAKLQGRVLIVDDVMSAGTAVRESIALIQAAGATPHAVAIALDRQEKATENGLDVEHSAVQYVTRQLGLQVCAIARLSDLLQYLSEKSDSPSGGETLDGQRLKDHYQSVLAYRERYGVN.

Lys29 is a 5-phospho-alpha-D-ribose 1-diphosphate binding site. Residue 37–38 (FF) coordinates orotate. 5-phospho-alpha-D-ribose 1-diphosphate contacts are provided by residues 79–80 (YK), Arg105, Lys106, Lys109, His111, and 130–138 (DDVMSAGTA). 2 residues coordinate orotate: Ser134 and Arg162.

Belongs to the purine/pyrimidine phosphoribosyltransferase family. PyrE subfamily. As to quaternary structure, homodimer. Mg(2+) serves as cofactor.

The catalysed reaction is orotidine 5'-phosphate + diphosphate = orotate + 5-phospho-alpha-D-ribose 1-diphosphate. It functions in the pathway pyrimidine metabolism; UMP biosynthesis via de novo pathway; UMP from orotate: step 1/2. Catalyzes the transfer of a ribosyl phosphate group from 5-phosphoribose 1-diphosphate to orotate, leading to the formation of orotidine monophosphate (OMP). This is Orotate phosphoribosyltransferase from Polaromonas naphthalenivorans (strain CJ2).